The sequence spans 419 residues: Septin-2 (419 aa).

The Septin-type G domain occupies 40–306 (NGFVFNVMCI…ELYRQKRLEQ (267 aa)). The G1 motif stretch occupies residues 50 to 57 (GETGLGKS). GTP contacts are provided by residues 50–57 (GETGLGKS), S79, G105, 186–194 (KADTISKVE), G240, and R255. Positions 102–105 (DTVG) are G3 motif. Positions 185 to 188 (AKAD) are G4 motif. An important for dimerization region spans residues 259–269 (WGTVQVENETH).

Belongs to the TRAFAC class TrmE-Era-EngA-EngB-Septin-like GTPase superfamily. Septin GTPase family. In terms of assembly, may assemble into a multicomponent structure.

It is found in the cytoplasm. It localises to the cytoskeleton. The protein localises to the spindle. Functionally, involved in cytokinesis. In Drosophila melanogaster (Fruit fly), this protein is Septin-2.